Consider the following 401-residue polypeptide: MKEKIVLAYSGGLDTSVAVQWLIDKGYDVVACCLDVGEGKDLDIVYKKALDMGAVECHIIDATKEFSDEYVSYAIKGNLMYENAYPLVSALSRPLIAKKLVEIAEKTNSVGIAHGCTGKGNDQVRFEVAIKALNPSLKAFAPVREWAWSREEEIDYAIKHNIPVSINHDSPYSIDQNLWGRANECGILEDPYAAPPEDAFDLTNALEETPDTADEIILTFDKGIPVQIDGKTYELDDLILTLNALAGKHGIGRIDHVENRLVGIKSREIYEAPAAEVILKAHKALETITLTKDVAHFKPIIEKQFAEQLYNGLWFSPLTDSLKLFIDSTQQYVSGDVRIKLFKGNAIVNGRKSPYTLYDEKLATYTKEDAFNQDAAVGFIDIYGLPTQVNAMLHGGYSNEQ.

A8 to S16 is a binding site for ATP. Y85 contributes to the L-citrulline binding site. Position 115 (G115) interacts with ATP. The L-aspartate site is built by T117, N121, and D122. N121 provides a ligand contact to L-citrulline. 4 residues coordinate L-citrulline: R125, S173, E258, and Y270.

The protein belongs to the argininosuccinate synthase family. Type 1 subfamily. In terms of assembly, homotetramer.

The protein localises to the cytoplasm. It carries out the reaction L-citrulline + L-aspartate + ATP = 2-(N(omega)-L-arginino)succinate + AMP + diphosphate + H(+). The protein operates within amino-acid biosynthesis; L-arginine biosynthesis; L-arginine from L-ornithine and carbamoyl phosphate: step 2/3. The chain is Argininosuccinate synthase from Staphylococcus aureus (strain Mu3 / ATCC 700698).